The sequence spans 78 residues: Large ribosomal subunit protein bL28 (78 aa).

The tract at residues 1–30 is disordered; sequence MAAHCQVTGAQPGFGHSISHSHRRTKRRWN. The segment covering 19-30 has biased composition (basic residues); sequence SHSHRRTKRRWN.

It belongs to the bacterial ribosomal protein bL28 family.

The protein is Large ribosomal subunit protein bL28 of Kocuria rhizophila (strain ATCC 9341 / DSM 348 / NBRC 103217 / DC2201).